The primary structure comprises 443 residues: Signal recognition particle 54 kDa protein (443 aa).

GTP-binding positions include 104–111 (GLQGSGKT), 184–188 (DTAGR), and 242–245 (TKLD).

The protein belongs to the GTP-binding SRP family. SRP54 subfamily. As to quaternary structure, part of the signal recognition particle protein translocation system, which is composed of SRP and FtsY. Archaeal SRP consists of a 7S RNA molecule of 300 nucleotides and two protein subunits: SRP54 and SRP19.

It is found in the cytoplasm. The catalysed reaction is GTP + H2O = GDP + phosphate + H(+). In terms of biological role, involved in targeting and insertion of nascent membrane proteins into the cytoplasmic membrane. Binds to the hydrophobic signal sequence of the ribosome-nascent chain (RNC) as it emerges from the ribosomes. The SRP-RNC complex is then targeted to the cytoplasmic membrane where it interacts with the SRP receptor FtsY. This Methanosarcina barkeri (strain Fusaro / DSM 804) protein is Signal recognition particle 54 kDa protein.